Consider the following 258-residue polypeptide: Imidazole glycerol phosphate synthase subunit HisF (258 aa).

Active-site residues include D11 and D130.

The protein belongs to the HisA/HisF family. As to quaternary structure, heterodimer of HisH and HisF.

It is found in the cytoplasm. The enzyme catalyses 5-[(5-phospho-1-deoxy-D-ribulos-1-ylimino)methylamino]-1-(5-phospho-beta-D-ribosyl)imidazole-4-carboxamide + L-glutamine = D-erythro-1-(imidazol-4-yl)glycerol 3-phosphate + 5-amino-1-(5-phospho-beta-D-ribosyl)imidazole-4-carboxamide + L-glutamate + H(+). The protein operates within amino-acid biosynthesis; L-histidine biosynthesis; L-histidine from 5-phospho-alpha-D-ribose 1-diphosphate: step 5/9. Functionally, IGPS catalyzes the conversion of PRFAR and glutamine to IGP, AICAR and glutamate. The HisF subunit catalyzes the cyclization activity that produces IGP and AICAR from PRFAR using the ammonia provided by the HisH subunit. The sequence is that of Imidazole glycerol phosphate synthase subunit HisF from Nitrobacter winogradskyi (strain ATCC 25391 / DSM 10237 / CIP 104748 / NCIMB 11846 / Nb-255).